A 4367-amino-acid chain; its full sequence is Guanylate cyclase (4367 aa).

Positions 1–10 (MKKTRTTAAE) are enriched in polar residues. Residues 1 to 70 (MKKTRTTAAE…MSFLQGKHQQ (70 aa)) form a disordered region. The Cytoplasmic portion of the chain corresponds to 1–150 (MKKTRTTAAE…FKNLWEQFHR (150 aa)). Over residues 19 to 33 (PHDEHRGRGREHGGA) the composition is skewed to basic and acidic residues. The span at 54 to 63 (HQATQKQMSF) shows a compositional bias: polar residues. Residues 151-171 (VINWWFLVMAIIQAIPQLHYN) traverse the membrane as a helical segment. Residues 172–174 (PNH) are Extracellular-facing. The chain crosses the membrane as a helical span at residues 175-195 (AWSTALPFAIVLVFGMLKDAF). At 196-373 (TDLGRRERDR…GFKRPHIEKD (178 aa)) the chain is on the cytoplasmic side. Residues 374 to 394 (INTYLFISFFIVFLTILISVM) form a helical membrane-spanning segment. Over 395-452 (SKWSVQERDSGDTGVTDAGASSGSGSSSGETSQTYGSSVEFMLGSRDLLQNPWMSILR) the chain is Extracellular. A disordered region spans residues 402-426 (RDSGDTGVTDAGASSGSGSSSGETS). Residues 407 to 426 (TGVTDAGASSGSGSSSGETS) are compositionally biased toward low complexity. Residues 453 to 473 (FLAVYAPVLPLSLPLILDVVY) form a helical membrane-spanning segment. At 474–2258 (LLQSVLIEGD…VHGRLSLMRV (1785 aa)) the chain is on the cytoplasmic side. 10 disordered regions span residues 486 to 535 (IRGG…QQPL), 550 to 699 (SEKF…ISGR), 831 to 918 (ETSA…ASSL), 932 to 966 (RLEE…PQLA), 980 to 1047 (VGIQ…GELS), 1079 to 1164 (GMSF…MPAV), 1344 to 1593 (PSGT…SLKS), 1607 to 1652 (FRRG…TGTG), 1773 to 1861 (GGRG…GLRS), and 1881 to 1946 (DKQH…PQHL). The span at 523–535 (AHSSQNASLQQPL) shows a compositional bias: polar residues. Basic and acidic residues-rich tracts occupy residues 605–628 (ETLR…REQL) and 670–679 (RRSDDRDRKS). The segment covering 850–863 (SAASSRSQSAPASA) has biased composition (low complexity). The span at 880-892 (QTLTNQQTGQQSP) shows a compositional bias: polar residues. The segment covering 906–917 (ASPGAADSPASS) has biased composition (low complexity). Residues 932–948 (RLEETGSQKEEDSRSDR) are compositionally biased toward basic and acidic residues. Over residues 983–996 (QSQHSSQSLLSSRQ) the composition is skewed to low complexity. Over residues 1025–1047 (DRMYSRDYHRESRSSSPRDGELS) the composition is skewed to basic and acidic residues. Composition is skewed to polar residues over residues 1084 to 1094 (SRPSSQFTFSS) and 1117 to 1130 (RSLT…TASP). A compositionally biased stretch (low complexity) spans 1344 to 1357 (PSGTSASSGAPSGP). 2 stretches are compositionally biased toward gly residues: residues 1370–1381 (QGQGHGSLGAPG) and 1389–1400 (CLGGAGGSGARG). The segment covering 1443–1454 (VPSPRPLSPAGP) has biased composition (pro residues). Positions 1527 to 1542 (SFKEKHEEFAFSKDED) are enriched in basic and acidic residues. Residues 1543 to 1567 (TATVDQDDTQSATDEEHDVEGEEEE) show a composition bias toward acidic residues. The segment covering 1583–1593 (SASASLMSLKS) has biased composition (low complexity). 3 stretches are compositionally biased toward polar residues: residues 1628-1652 (GRSS…TGTG), 1779-1791 (VSLS…SSAK), and 1843-1852 (VNPSGQTYSQ). Residues 1881–1922 (DKQHQRGHGPEGDEGSHELEGHDAHTGDSHGGHHRDQAEPRA) show a composition bias toward basic and acidic residues. Over residues 1933-1942 (RLPQKTQNRL) the composition is skewed to polar residues. A helical membrane pass occupies residues 2259-2279 (STVILWSFFKSLCIGLPTFLF). Over 2280 to 2289 (QPQAFWSAVE) the chain is Extracellular. Residues 2290 to 2310 (VYDPLLLMIVDFFWTTLPGII) form a helical membrane-spanning segment. Residues 2311–2343 (HGYSDQDLPTHLLPSVPVLYTPGRRRLYFNGFR) lie on the Cytoplasmic side of the membrane. Residues 2344-2364 (FILWTVEGIIYSFLIFYLLQA) traverse the membrane as a helical segment. The Extracellular portion of the chain corresponds to 2365–2376 (TWMDGNTFHDGQ). A helical membrane pass occupies residues 2377–2397 (VLGFHSYGILLLFGSLLQSNV). Topologically, residues 2398–2408 (RIILETSLWTP) are cytoplasmic. A helical membrane pass occupies residues 2409–2429 (TFLFTTIVLCTIMFFPTVLLY). Residues 2430–2444 (SVTGWPRRYMELAGR) are Extracellular-facing. The chain crosses the membrane as a helical span at residues 2445-2465 (VVFAWPMLYFLIPLWVSIGIL). At 2466 to 2724 (VQLLLQVFTS…LKRLVPWYRV (259 aa)) the chain is on the cytoplasmic side. A helical membrane pass occupies residues 2725-2745 (IFMLIALYQLLSFLTEYFIDI). Residues 2746-2762 (HWNPGETEMEPWMCVPT) are Extracellular-facing. Residues 2763 to 2783 (LVVEIGFAAVVVCTFYDFIFL) traverse the membrane as a helical segment. Residues 2784–2785 (DH) lie on the Cytoplasmic side of the membrane. A helical membrane pass occupies residues 2786–2806 (FSLILNSIVFLMVSSSIVFYT). The Extracellular segment spans residues 2807-2823 (ASHVDGTLTSVLFPVFT). Residues 2824-2844 (FVILRISFLQAVVWNILFLIV) traverse the membrane as a helical segment. The Cytoplasmic portion of the chain corresponds to 2845–2858 (TVARFMLDKKYLPP). A helical membrane pass occupies residues 2859 to 2879 (LNFVHYIPLFIGIDVFVAFVG). The Extracellular portion of the chain corresponds to 2880–2903 (YRLEYNQRKSFLLDYSVDASRRKQ). A helical transmembrane segment spans residues 2904–2924 (REILNTMLPSFVVDQMINSEL). Residues 2925-3693 (NEEGIPTSLK…RTHFYNNKSN (769 aa)) lie on the Cytoplasmic side of the membrane. Positions 2942 to 3150 (SVIFCDVYEF…DTVNTASRMK (209 aa)) constitute a Guanylate cyclase 1 domain. Disordered regions lie at residues 3214-3245 (DVIS…ASSG), 3359-3402 (GQTE…SRFD), 3456-3475 (SGDE…EVPL), 3485-3508 (QARE…HTPT), 3523-3596 (GCAA…ETEK), and 3620-3653 (FRRR…VDDE). Basic and acidic residues predominate over residues 3383–3402 (RADRRPAGRREDSRGDSRFD). Basic and acidic residues-rich tracts occupy residues 3485-3499 (QARE…KRSG), 3529-3541 (EEEK…RESE), and 3549-3569 (TESR…DARE). Low complexity predominate over residues 3626-3637 (AAPSEAASPSSA). A helical membrane pass occupies residues 3694-3714 (INTIEQALIIFLVTFCVQTLT). Residues 3715-3736 (RLALPRFYVVCSHHTINLHVCT) are Extracellular-facing. A helical transmembrane segment spans residues 3737 to 3757 (GLYWAVRATYTLAAFVLWMLF). Topologically, residues 3758-3772 (HYRNRKEVATCLELR) are cytoplasmic. The helical transmembrane segment at 3773 to 3793 (WMVFLLNLLFISASCVFALSN) threads the bilayer. The Extracellular segment spans residues 3794–3895 (SWGVCGQQQE…GSDLVTANGR (102 aa)). A helical membrane pass occupies residues 3896–3916 (AYTYWLLSDTIELFFYIVILH). At 3917-3921 (HNTGL) the chain is on the cytoplasmic side. The chain crosses the membrane as a helical span at residues 3922-3942 (LFQNCILVDVLLMTMSLTFII). The Extracellular segment spans residues 3943–3950 (TTARETAS). A helical transmembrane segment spans residues 3951–3971 (TVSTIATFPCYVFFNLVSAYC). The Cytoplasmic segment spans residues 3972–4367 (KEYIDRLTFY…GSTPGSALGS (396 aa)). A Guanylate cyclase 2 domain is found at 4024–4159 (TFLFADICGF…MDVLTGNMME (136 aa)). Mg(2+) is bound by residues aspartate 4029, isoleucine 4030, and aspartate 4073. The disordered stretch occupies residues 4292 to 4367 (ASHGDSGPSD…GSTPGSALGS (76 aa)). Residues 4333–4344 (DGLKQLRKEIER) are compositionally biased toward basic and acidic residues. A compositionally biased stretch (polar residues) spans 4356–4367 (DIGSTPGSALGS).

In the N-terminal section; belongs to the cation transport ATPase (P-type) (TC 3.A.3) family. Type IV subfamily. It in the C-terminal section; belongs to the adenylyl cyclase class-4/guanylyl cyclase family. As to quaternary structure, interacts with chaperone CDC50.1; the interaction regulates guanylate cyclase GC trafficking and sensing environmental changes. Interacts with UGO; the interaction regulates guanylate cyclase GC trafficking and catalytic activity. Mg(2+) is required as a cofactor. Requires Mn(2+) as cofactor.

The protein localises to the cell membrane. The catalysed reaction is GTP = 3',5'-cyclic GMP + diphosphate. Catalyzes the synthesis of the second messenger cGMP from GTP. During the tachyzoite lytic growth cycle in host cells, detects and transduces environmental changes in potassium, phosphatidic acid and pH levels. By producing cGMP in response to these environmental changes, activates PKG and thereby regulates PKG-dependent microneme secretion which is essential for tachyzoite motility, host cell attachment invasion of and egress from host cells. May play a role in the fission of connected tachyzoites at their basal pole during egress. Does not display flippase activity towards phosphatidylserine, phosphatidic acid or phosphatidylcholine. This Toxoplasma gondii (strain ATCC 50853 / GT1) protein is Guanylate cyclase.